The primary structure comprises 320 residues: Thymidylate synthase (320 aa).

Residues R27 and 182–183 (RR) contribute to the dUMP site. C202 acts as the Nucleophile in catalysis. DUMP-binding positions include 222–225 (RSAD), N233, and 263–265 (HIY). D225 is a binding site for (6R)-5,10-methylene-5,6,7,8-tetrahydrofolate. A319 lines the (6R)-5,10-methylene-5,6,7,8-tetrahydrofolate pocket.

It belongs to the thymidylate synthase family. Bacterial-type ThyA subfamily. As to quaternary structure, homodimer.

It is found in the cytoplasm. It catalyses the reaction dUMP + (6R)-5,10-methylene-5,6,7,8-tetrahydrofolate = 7,8-dihydrofolate + dTMP. It functions in the pathway pyrimidine metabolism; dTTP biosynthesis. Functionally, catalyzes the reductive methylation of 2'-deoxyuridine-5'-monophosphate (dUMP) to 2'-deoxythymidine-5'-monophosphate (dTMP) while utilizing 5,10-methylenetetrahydrofolate (mTHF) as the methyl donor and reductant in the reaction, yielding dihydrofolate (DHF) as a by-product. This enzymatic reaction provides an intracellular de novo source of dTMP, an essential precursor for DNA biosynthesis. This chain is Thymidylate synthase, found in Limosilactobacillus reuteri (strain DSM 20016) (Lactobacillus reuteri).